The chain runs to 143 residues: MAKKIIGFIKLQIPAGKANPSPPVGPALGQRGLNIMEFCKAFNAQTQSMEPGLPIPVVITAFADKSFTFIMKTPPTTIMIKKAAKIEKGSPRPHTDKVGSITRAQAEEIAKAKMPDLTAADMDAAVRTIAGSARSMGITVEGF.

The protein belongs to the universal ribosomal protein uL11 family. As to quaternary structure, part of the ribosomal stalk of the 50S ribosomal subunit. Interacts with L10 and the large rRNA to form the base of the stalk. L10 forms an elongated spine to which L12 dimers bind in a sequential fashion forming a multimeric L10(L12)X complex. One or more lysine residues are methylated.

Forms part of the ribosomal stalk which helps the ribosome interact with GTP-bound translation factors. This is Large ribosomal subunit protein uL11 from Polynucleobacter necessarius subsp. necessarius (strain STIR1).